The chain runs to 392 residues: Chorismate synthase (392 aa).

Residues Arg-39 and Arg-45 each coordinate NADP(+). FMN is bound by residues Arg-131–Ser-133, Asn-255–Ala-256, Gly-300, Lys-315–Thr-319, and Arg-341.

Belongs to the chorismate synthase family. Homotetramer. FMNH2 is required as a cofactor.

The enzyme catalyses 5-O-(1-carboxyvinyl)-3-phosphoshikimate = chorismate + phosphate. Its pathway is metabolic intermediate biosynthesis; chorismate biosynthesis; chorismate from D-erythrose 4-phosphate and phosphoenolpyruvate: step 7/7. Its function is as follows. Catalyzes the anti-1,4-elimination of the C-3 phosphate and the C-6 proR hydrogen from 5-enolpyruvylshikimate-3-phosphate (EPSP) to yield chorismate, which is the branch point compound that serves as the starting substrate for the three terminal pathways of aromatic amino acid biosynthesis. This reaction introduces a second double bond into the aromatic ring system. This chain is Chorismate synthase, found in Leuconostoc citreum (strain KM20).